Here is a 268-residue protein sequence, read N- to C-terminus: Protein MGF 300-1L (268 aa).

Over 1–175 the chain is Cytoplasmic; sequence MVSLTTCCLK…QTFKTFYAKN (175 aa). The helical transmembrane segment at 176-193 threads the bilayer; the sequence is YSLSTLYCIFLAIYYKLY. Topologically, residues 194-268 are extracellular; that stretch reads TALRKMVKIY…MYAFSQNDYW (75 aa). A glycan (N-linked (GlcNAc...) asparagine; by host) is linked at Asn-227.

Belongs to the asfivirus MGF 300 family.

It is found in the host membrane. Functionally, plays a role in virus cell tropism, and may be required for efficient virus replication in macrophages. In African swine fever virus (strain Badajoz 1971 Vero-adapted) (Ba71V), this protein is Protein MGF 300-1L.